The chain runs to 238 residues: Ribosomal RNA small subunit methyltransferase G (238 aa).

Residues Gly-77, Phe-82, 128–129 (AE), and Arg-147 contribute to the S-adenosyl-L-methionine site.

Belongs to the methyltransferase superfamily. RNA methyltransferase RsmG family.

It localises to the cytoplasm. Functionally, specifically methylates the N7 position of guanine in position 535 of 16S rRNA. The protein is Ribosomal RNA small subunit methyltransferase G of Exiguobacterium sp. (strain ATCC BAA-1283 / AT1b).